Consider the following 83-residue polypeptide: Cobrotoxin (83 aa).

The signal sequence occupies residues 1-21; sequence MKTLLLTLLVVTIVCLDLGYT. 4 disulfide bridges follow: C24/C45, C38/C62, C64/C75, and C76/C81.

It belongs to the three-finger toxin family. Short-chain subfamily. Type I alpha-neurotoxin sub-subfamily. Expressed by the venom gland.

Its subcellular location is the secreted. Functionally, binds to muscle nicotinic acetylcholine receptor (nAChR) and inhibit acetylcholine from binding to the receptor, thereby impairing neuromuscular transmission. Has a higher toxicity than cobrotoxin-b. In vivo, when tested on rat arthritis models, shows anti-inflammation and immunosuppression effects. The polypeptide is Cobrotoxin (Naja atra (Chinese cobra)).